The sequence spans 613 residues: Na(+)/H(+) antiporter NhaA 1 (613 aa).

Residues 1–23 are disordered; that stretch reads MTEASARTIGPLPSRFSRDPKTP. Residues 1–408 are na(+)/H(+) antiporter NhaA; the sequence is MTEASARTIG…DPARQDEARV (408 aa). The next 11 helical transmembrane spans lie at 29–49, 81–101, 110–130, 138–158, 168–188, 191–211, 231–251, 300–320, 337–357, 377–397, and 408–428; these read AAAA…NSPW, GLMA…FVIG, AVPV…FLTF, QAWG…LAVI, IFLL…IALF, DDLK…LAMV, IALY…AVLI, AVGP…NAGV, WGIV…ATAL, GGAA…DVAI, and VGVL…FRIT. A Thioredoxin domain is found at 409–613; that stretch reads GVLIASVLAF…SLIRALEAGR (205 aa).

In the N-terminal section; belongs to the NhaA Na(+)/H(+) (TC 2.A.33) antiporter family.

The protein resides in the cell membrane. It carries out the reaction Na(+)(in) + 2 H(+)(out) = Na(+)(out) + 2 H(+)(in). Functionally, na(+)/H(+) antiporter that extrudes sodium in exchange for external protons. The chain is Na(+)/H(+) antiporter NhaA 1 from Mycobacterium sp. (strain KMS).